A 275-amino-acid chain; its full sequence is Small ribosomal subunit protein uS2 (275 aa).

Residues 232 to 256 are disordered; it reads ARATDGKPEPEPVPGQELGADEPLA.

Belongs to the universal ribosomal protein uS2 family.

This chain is Small ribosomal subunit protein uS2, found in Acidothermus cellulolyticus (strain ATCC 43068 / DSM 8971 / 11B).